Consider the following 440-residue polypeptide: Tyrosine--tRNA ligase (440 aa).

L-tyrosine is bound at residue Tyr46. Positions 51–60 (PTAPSLHIGN) match the 'HIGH' region motif. Residues Tyr181 and Gln185 each coordinate L-tyrosine. The 'KMSKS' region signature appears at 241 to 245 (KFGKS). Lys244 contacts ATP. The S4 RNA-binding domain maps to 373 to 430 (DRIAQAGVSAGLFKSISEARKTIKSGGVYVNNVRVEDEEQLLGDGDFLKGRFVVLRRG).

The protein belongs to the class-I aminoacyl-tRNA synthetase family. TyrS type 1 subfamily. Homodimer.

It is found in the cytoplasm. The catalysed reaction is tRNA(Tyr) + L-tyrosine + ATP = L-tyrosyl-tRNA(Tyr) + AMP + diphosphate + H(+). In terms of biological role, catalyzes the attachment of tyrosine to tRNA(Tyr) in a two-step reaction: tyrosine is first activated by ATP to form Tyr-AMP and then transferred to the acceptor end of tRNA(Tyr). This chain is Tyrosine--tRNA ligase, found in Bifidobacterium animalis subsp. lactis (strain AD011).